A 1328-amino-acid polypeptide reads, in one-letter code: Retrovirus-related Pol polyprotein from transposon TNT 1-94 (1328 aa).

The tract at residues Pro189–Ala265 is disordered. Residues Ala217–Val229 show a composition bias toward basic residues. Residues Arg230–Asn247 form a CCHC-type zinc finger. The span at Phe241–Gly253 shows a compositional bias: basic and acidic residues. Catalysis depends on Asp297, which acts as the For protease activity. In terms of domain architecture, Integrase catalytic spans Ser473–Glu642. Residues Thr729–Ser742 are compositionally biased toward polar residues. Residues Thr729–Thr800 form a disordered region. Residues Glu770 to Pro798 show a composition bias toward basic and acidic residues.

The enzyme catalyses DNA(n) + a 2'-deoxyribonucleoside 5'-triphosphate = DNA(n+1) + diphosphate. This chain is Retrovirus-related Pol polyprotein from transposon TNT 1-94, found in Nicotiana tabacum (Common tobacco).